The following is a 392-amino-acid chain: Gastricsin (392 aa).

A signal peptide spans 1-16 (MKWMVVALLCLPLLEA). Residues 17–62 (SLLRVPLRKMKSIRETMKEQGVLKDFLKTHKYDPGQKYHFGNFGDY) constitute a propeptide, activation peptide. The region spanning 76 to 389 (YFGEISIGTP…DMGNNKVGLA (314 aa)) is the Peptidase A1 domain. Asp-94 is a catalytic residue. 2 cysteine pairs are disulfide-bonded: Cys-107–Cys-112 and Cys-270–Cys-275. Asp-280 is a catalytic residue. Cysteines 314 and 347 form a disulfide.

Belongs to the peptidase A1 family.

Its subcellular location is the secreted. It carries out the reaction More restricted specificity than pepsin A, but shows preferential cleavage at Tyr-|-Xaa bonds. High activity on hemoglobin.. Functionally, hydrolyzes a variety of proteins. This is Gastricsin (Pgc) from Rattus norvegicus (Rat).